An 881-amino-acid chain; its full sequence is NACHT, LRR and PYD domains-containing protein 6 (881 aa).

One can recognise a Pyrin domain in the interval 1-129 (MDAAGASCSS…EHVLRQHAKV (129 aa)). Position 104 is a phosphoserine (Ser-104). The tract at residues 154–175 (AGEDELLGTSGEPEPERARRSD) is disordered. An NACHT domain is found at 194 to 510 (LTVVLQGPAG…EFLAALSYLL (317 aa)). ATP is bound at residue 200 to 207 (GPAGIGKT). The LRR 1 repeat unit spans residues 459–484 (EKDLERLKLQGSQVQTMFLSKKELPG). The disordered stretch occupies residues 579–611 (QSQPKVATVGAEKKDELKDEEAEEEEEEEEEEE). Over residues 596–611 (KDEEAEEEEEEEEEEE) the composition is skewed to acidic residues. LRR repeat units lie at residues 637–660 (LSSL…VLSY), 749–772 (APSL…LLSQ), and 839–863 (TLSL…TLKP).

This sequence belongs to the NLRP family. In terms of assembly, homomultimer; forms the NLRP6 inflammasome polymeric complex, a filament composed of homopolymers in response to pathogens and other damage-associated signals. The core of NLRP6 inflammasomes consists of a signal sensor component (NLRP6), an adapter (PYCARD/ASC), which recruits effector pro-inflammatory caspases (CASP1 and CASP4). Interacts (via pyrin domain) with PYCARD/ASC (via pyrin domain); interaction takes place following NLRP6 activation and formation of liquid-liquid phase separation (LLPS), initiating nucleation which greatly enhances further addition of soluble PYCARD/ASC molecules to the speck in a prion-like polymerization process. Clustered PYCARD/ASC nucleates the formation of CASP1 (or possibly CASP4) filaments through the interaction of their respective CARD domains, acting as a platform for CASP1 polymerization. CASP1 filament formation increases local enzyme concentration, resulting in trans-autocleavage and activation. Active CASP1 then processes IL1B and IL18 precursors, leading to the release of mature cytokines in the extracellular milieu and inflammatory response. Interacts with DHX15. Polyubiquitinated with 'Lys-63'-linked chains, promoting the interaction with PYCARD/ASC and formation of the NLRP6 inflammasome. Deubiquitination by CYLD decreases the interaction with PYCARD/ASC. Detected in several tissues. Expressed in renal epithelial cells in medullary thick ascending limb of Henle, as well as in salivary gland apical epithelium (at protein level). Isoform 1 is widely expressed. Isoform 2 is primarily expressed in kidney (at protein level).

It is found in the cytoplasm. The protein resides in the inflammasome. Its subcellular location is the cell membrane. The protein localises to the nucleus membrane. Acts as the sensor component of the NLRP6 inflammasome, which mediates inflammasome activation in response to various pathogen-associated signals, leading to maturation and secretion of IL1B and IL18. Inflammasomes are supramolecular complexes that assemble in the cytosol in response to pathogens and other damage-associated signals and play critical roles in innate immunity and inflammation. Acts as a recognition receptor (PRR): recognizes and binds specific pathogens and other damage-associated signals, such as lipoteichoic acid (LTA), a cell-wall component of Gram-positive bacteria, or double stranded RNA (dsRNA). May also recognize and bind lipopolysaccharide (LPS), a major component of the outer membrane of Gram-negative bacteria; however, LPS is probably not a major activator of the NLRP6 inflammasome. Following LTA- or dsRNA-binding, NLRP6 undergoes liquid-liquid phase separation (LLPS), enhancing multivalent interactions, an essential step for the formation of the NLRP6 inflammasome polymeric complex. The NLRP6 inflammasome acts by promoting recruitment of effector pro-inflammatory caspases (CASP1 and/or CASP4) that catalyze maturation and secretion of IL1B and IL18 in the extracellular milieu. The NLRP6 inflammasome plays a central role in the maintenance of epithelial integrity and host defense against microbial infections in the intestine. Required to restrict infection against Gram-positive bacteria by recognizing lipoteichoic acid (LTA), leading to recruitment of CASP4 and CASP1, and subsequent maturation and secretion of IL1B and IL18. Involved in intestinal antiviral innate immunity together with DHX15: recognizes and binds viral dsRNA to restrict infection by enteric viruses through the interferon pathway and GSDMD-dependent release of IL18. Required to prevent infection by the apicomplexan parasite Cryptosporidium in enterocytes by promoting GSDMD-dependent release of IL18. The NLRP6 inflammasome may also regulate the gut microbiota composition by acting as a sensor of microbiota-associated metabolites to form a PYCARD/ASC-dependent inflammasome for downstream IL18 release and secretion of antimicrobial peptides. Essential for gut mucosal self-renewal and proliferation. Regulate mucus secretion in an inflammasome- and autophagy-dependent manner to prevent invasion by enteric bacteria,. During systemic bacterial infections, the NLRP6 inflammasome negatively regulates neutrophil recruitment and neutrophil extracellular traps (NETs) formation. May promote peripheral nerve recovery following injury via an inflammasome-independent mechanism. This chain is NACHT, LRR and PYD domains-containing protein 6, found in Rattus norvegicus (Rat).